Here is a 548-residue protein sequence, read N- to C-terminus: Leucine-rich repeat LGI family member 3 (548 aa).

Residues 1–30 form the signal peptide; sequence MAGLRARRGPAPGLLALSALGFCLMLQVSA. Residues 31–64 form the LRRNT domain; the sequence is KRLPKTPPCPPSCSCTRDTAFCVDSKAVPRNLPS. 3 LRR repeats span residues 89–110, 113–134, and 137–158; these read LLQFLLLNSNKFTLIGDNAFTG, HLQYLFIENNDIWTLSKFTFRG, and SLTHLSLANNNLQTLPRDIFRP. Positions 170-220 constitute an LRRCT domain; that stretch reads NSLNCDCKVKWLVEWLAHTNTTVAPIYCASPPRFQEHKVQDLPLREFDCIT. Asparagine 189 carries an N-linked (GlcNAc...) asparagine glycan. EAR repeat units follow at residues 222–264 and 268–310; these read DFVL…KWDY and QLRD…HWDP. Asparagine 311 carries an N-linked (GlcNAc...) asparagine glycan. 5 EAR repeats span residues 314-361, 363-406, 410-453, 455-497, and 501-543; these read RFTK…RWHQ, GFYS…QWSR, QFVA…RWEG, RFSE…QWDE, and KFVR…RHVV. N-linked (GlcNAc...) asparagine glycosylation is present at asparagine 394.

In terms of assembly, interacts with STX1A.

The protein resides in the secreted. It localises to the cytoplasmic vesicle. The protein localises to the secretory vesicle. It is found in the synaptic vesicle. Its subcellular location is the synapse. The protein resides in the synaptosome. Functionally, may participate in the regulation of neuronal exocytosis. The sequence is that of Leucine-rich repeat LGI family member 3 (LGI3) from Macaca fascicularis (Crab-eating macaque).